A 208-amino-acid chain; its full sequence is Protein late bloomer (208 aa).

4 consecutive transmembrane segments (helical) span residues Ile10–Ile30, Phe41–Phe61, Ser67–Val87, and Phe174–Phe194.

Belongs to the tetraspanin (TM4SF) family. In terms of tissue distribution, transiently expressed on motor axons, growth cones and terminal arbors.

Its subcellular location is the membrane. It is found in the synapse. Its function is as follows. Facilitates synapse formation. The sequence is that of Protein late bloomer (lbm) from Drosophila melanogaster (Fruit fly).